Consider the following 343-residue polypeptide: Putative outer membrane protein y4fJ (343 aa).

Positions 1-17 (MRMNFSTVLLGSSVALA) are cleaved as a signal peptide.

Belongs to the alphaproteobacteria porin family.

The protein localises to the cell outer membrane. Functionally, may act as an outer membrane pore. This Sinorhizobium fredii (strain NBRC 101917 / NGR234) protein is Putative outer membrane protein y4fJ.